A 187-amino-acid chain; its full sequence is Elongation factor P (187 aa).

The protein belongs to the elongation factor P family.

It is found in the cytoplasm. The protein operates within protein biosynthesis; polypeptide chain elongation. Its function is as follows. Involved in peptide bond synthesis. Stimulates efficient translation and peptide-bond synthesis on native or reconstituted 70S ribosomes in vitro. Probably functions indirectly by altering the affinity of the ribosome for aminoacyl-tRNA, thus increasing their reactivity as acceptors for peptidyl transferase. The polypeptide is Elongation factor P (Leifsonia xyli subsp. xyli (strain CTCB07)).